A 389-amino-acid chain; its full sequence is Arrestin-C (389 aa).

Belongs to the arrestin family. In terms of tissue distribution, retina and pineal gland.

Functionally, may play a role in an as yet undefined retina-specific signal transduction. Could bind to photoactivated-phosphorylated red/green opsins. This chain is Arrestin-C (arr3), found in Lithobates pipiens (Northern leopard frog).